We begin with the raw amino-acid sequence, 294 residues long: Shell matrix protein (294 aa).

In terms of tissue distribution, component of the organic matrix of calcified shell layers like nacre and prisms.

It localises to the secreted. This is Shell matrix protein from Mytilus californianus (California mussel).